The primary structure comprises 358 residues: Putative glycylpeptide N-tetradecanoyltransferase (358 aa).

Belongs to the NMT family.

The enzyme catalyses N-terminal glycyl-[protein] + tetradecanoyl-CoA = N-tetradecanoylglycyl-[protein] + CoA + H(+). Its function is as follows. Adds a myristoyl group to the N-terminal glycine residue of certain proteins. The chain is Putative glycylpeptide N-tetradecanoyltransferase from Acanthamoeba polyphaga (Amoeba).